We begin with the raw amino-acid sequence, 178 residues long: Natriuretic and helokinestatin peptides (178 aa).

A signal peptide spans 1–25; sequence MNPRLACSTWLPLLLVLFTLDQGRA. 5 propeptides span residues 26-58, 69-73, 85-89, 103-112, and 123-146; these read NPVE…SEEN, ASDEN, ASEQKGPPFN, and AANE…RNKR. 2 disordered regions span residues 69–107 and 135–155; these read ASDE…SEQK and RSFE…GCFG. A disulfide bond links C153 and C169.

The protein in the C-terminal section; belongs to the natriuretic peptide family. In terms of tissue distribution, expressed by the venom gland.

The protein localises to the secreted. In terms of biological role, helokinestatins antagonize the vasodilatory actions of bradykinin at the B2 bradykinin receptor (BDKRB2), with helokinestatin-1 being the most potent antagonist. Its function is as follows. exhibits hypotensive and vasodepressor activities, possibly by targeting natriuretic peptide receptors NPR1 and NPR2. The protein is Natriuretic and helokinestatin peptides of Heloderma suspectum cinctum (Banded Gila monster).